The sequence spans 636 residues: Nucleolar protein 9 (636 aa).

Positions 1–59 (MGQGPRSPHKVGRRFPAGGKRGRGAKGSGRPLPGRKRQPWPPPDGRSEPAPDSHPHLSP) are disordered. Ser7 carries the phosphoserine modification. Basic and acidic residues predominate over residues 45–57 (GRSEPAPDSHPHL). Pumilio repeat units lie at residues 92–123 (EVET…KPLC) and 189–223 (EVCD…ESER). A disordered region spans residues 222–241 (ERARPRGSQSSEAQKTPAQE). Polar residues predominate over residues 228 to 238 (GSQSSEAQKTP). Pumilio repeat units lie at residues 313–348 (SVDG…QSLF), 351–386 (HLQG…SPVF), 509–544 (LTGP…RRRV), and 547–581 (NLKG…KEIA).

The protein belongs to the NOP9 family.

This Homo sapiens (Human) protein is Nucleolar protein 9 (NOP9).